Consider the following 197-residue polypeptide: uncharacterized protein (197 aa).

This is an uncharacterized protein from Orgyia pseudotsugata multicapsid polyhedrosis virus (OpMNPV).